Consider the following 444-residue polypeptide: VEPSGHAADRIARLPGQPAVDFDMYSGYITVDEGAGRSLFYLLQEAPEDAQPAPLVLWLNGGPGCSSVAYGASEELGAFRVKPRGAGLVLNEYRWNKVANVLFLDSPAGVGFSYTNTSSDIYTSGDNRTAHDSYAFLAKWFERFPHYKYRDFYIAGESYAGHYVPELSQLVHRSKNPVINLKGFMVGNGLIDDYHDYVGTFEFWWNHGIVSDDTYRRLKEACLHDSFIHPSPACDAATDVATAEQGNIDMYSLYTPVCNITSSSSSSSSSLSQQRRSRGRYPWLTGSYDPCTERYSTAYYNRRDVQMALHANVTGAMNYTWATCSDTINTHWHDAPRSMLPIYRELIAAGLRIWVFSGDTDAVVPLTATRYSIGALGLPTTTSWYPWYDDQEVGGWSQVYKGLTLVSVRGAGHEVPLHRPRQALVLFQYFLQGKPMPGQTKNAT.

60-62 is a substrate binding site; that stretch reads NGG. 3 cysteine pairs are disulfide-bonded: Cys-65–Cys-324, Cys-222–Cys-234, and Cys-258–Cys-291. N-linked (GlcNAc...) asparagine glycosylation is found at Asn-116 and Asn-127. Substrate is bound at residue 157–159; the sequence is ESY. Ser-158 is an active-site residue. An N-linked (GlcNAc...) asparagine glycan is attached at Asn-259. Residues 260 to 286 constitute a propeptide, linker peptide; it reads ITSSSSSSSSSLSQQRRSRGRYPWLTG. N-linked (GlcNAc...) asparagine glycans are attached at residues Asn-312 and Asn-318. Catalysis depends on residues Asp-361 and His-413. Substrate is bound at residue 409 to 413; that stretch reads RGAGH.

It belongs to the peptidase S10 family. In terms of assembly, carboxypeptidase II is a dimer, where each monomer is composed of two chains linked by a disulfide bond. In terms of processing, N-glycosylated.

It carries out the reaction Preferential release of a C-terminal arginine or lysine residue.. This is Serine carboxypeptidase 2 (CBP2) from Triticum aestivum (Wheat).